A 348-amino-acid polypeptide reads, in one-letter code: Zinc-type alcohol dehydrogenase-like protein C2E1P3.01 (348 aa).

The protein belongs to the zinc-containing alcohol dehydrogenase family. Quinone oxidoreductase subfamily.

The protein resides in the mitochondrion. This is Zinc-type alcohol dehydrogenase-like protein C2E1P3.01 from Schizosaccharomyces pombe (strain 972 / ATCC 24843) (Fission yeast).